The primary structure comprises 750 residues: Photosystem I P700 chlorophyll a apoprotein A1 (750 aa).

A run of 8 helical transmembrane segments spans residues 70-93 (VFSA…FHGA), 156-179 (LYCT…FHYH), 195-219 (LNHH…HVSL), 291-309 (IAHH…GHMY), 346-369 (WHAQ…HHMY), 385-411 (LSLF…IFMV), 433-455 (AIIS…LYIH), and 531-549 (FLVH…LILL). [4Fe-4S] cluster-binding residues include Cys-573 and Cys-582. The next 2 helical transmembrane spans lie at 589 to 610 (HVFL…HFSW) and 664 to 686 (LSAY…MFLF). His-675 contributes to the chlorophyll a' binding site. Met-683 and Tyr-691 together coordinate chlorophyll a. Trp-692 provides a ligand contact to phylloquinone. A helical membrane pass occupies residues 724 to 744 (AVGVTHYLLGGIATTWAFFLA).

The protein belongs to the PsaA/PsaB family. In terms of assembly, the PsaA/B heterodimer binds the P700 chlorophyll special pair and subsequent electron acceptors. PSI consists of a core antenna complex that captures photons, and an electron transfer chain that converts photonic excitation into a charge separation. The eukaryotic PSI reaction center is composed of at least 11 subunits. Requires P700 is a chlorophyll a/chlorophyll a' dimer, A0 is one or more chlorophyll a, A1 is one or both phylloquinones and FX is a shared 4Fe-4S iron-sulfur center. as cofactor.

Its subcellular location is the plastid. The protein localises to the chloroplast thylakoid membrane. It carries out the reaction reduced [plastocyanin] + hnu + oxidized [2Fe-2S]-[ferredoxin] = oxidized [plastocyanin] + reduced [2Fe-2S]-[ferredoxin]. PsaA and PsaB bind P700, the primary electron donor of photosystem I (PSI), as well as the electron acceptors A0, A1 and FX. PSI is a plastocyanin-ferredoxin oxidoreductase, converting photonic excitation into a charge separation, which transfers an electron from the donor P700 chlorophyll pair to the spectroscopically characterized acceptors A0, A1, FX, FA and FB in turn. Oxidized P700 is reduced on the lumenal side of the thylakoid membrane by plastocyanin. The sequence is that of Photosystem I P700 chlorophyll a apoprotein A1 from Triticum aestivum (Wheat).